The sequence spans 172 residues: Adenine phosphoribosyltransferase (172 aa).

It belongs to the purine/pyrimidine phosphoribosyltransferase family. Homodimer.

It localises to the cytoplasm. The catalysed reaction is AMP + diphosphate = 5-phospho-alpha-D-ribose 1-diphosphate + adenine. It participates in purine metabolism; AMP biosynthesis via salvage pathway; AMP from adenine: step 1/1. In terms of biological role, catalyzes a salvage reaction resulting in the formation of AMP, that is energically less costly than de novo synthesis. This Microcystis aeruginosa (strain NIES-843 / IAM M-2473) protein is Adenine phosphoribosyltransferase.